Here is a 489-residue protein sequence, read N- to C-terminus: Endothelial zinc finger protein induced by tumor necrosis factor alpha (489 aa).

Over residues 1 to 15 (MKELDPKNDISEDKL) the composition is skewed to basic and acidic residues. Disordered regions lie at residues 1 to 61 (MKEL…PLGI) and 98 to 122 (EKGA…KPPM). C2H2-type zinc fingers lie at residues 130–152 (YDCS…QRIH), 158–180 (FECD…QRVH), 186–208 (YACG…QRTH), 214–236 (YVCD…ERIH), 242–264 (YACG…QRTH), 270–292 (YVCP…QRTH), 298–320 (YACK…QRNH), 326–348 (YVCG…QRFH), 354–376 (FECS…QRIH), 382–404 (YECY…QIVH), 410–432 (YVCG…QRIH), 438–460 (YRCG…QRIH), and 466–488 (YRCG…LRIH).

Belongs to the krueppel C2H2-type zinc-finger protein family. Highly expressed in placenta, followed by brain, testis, pancreas, heart, small intestine, muscle, uterus, prostate and peripheral blood leukocytes. Not detected in liver, lung, colon, stomach, salivary and thyroid gland.

It localises to the nucleus. In terms of biological role, may be involved in transcriptional regulation. This Homo sapiens (Human) protein is Endothelial zinc finger protein induced by tumor necrosis factor alpha (ZNF71).